The primary structure comprises 152 residues: Transcriptional regulator MraZ (152 aa).

2 consecutive SpoVT-AbrB domains span residues 5–52 (ASAI…PIHE) and 81–124 (AHEV…DEQS).

The protein belongs to the MraZ family. As to quaternary structure, forms oligomers.

It localises to the cytoplasm. It is found in the nucleoid. The sequence is that of Transcriptional regulator MraZ from Shewanella baltica (strain OS223).